We begin with the raw amino-acid sequence, 421 residues long: MFIDVAKIELKAGKGGDGSVAFRREKYEPSGGPAGGDGGDGGSIIIVGDKDIKTLMDYSYRSIYKAESGGDGRNKKQFGKKGEDLILKVPVGTLVKDYDTDTVIYDVKHDKEEFVICKGGKGGKGNVHFKSSIRQAPRFAEPGEKGEEKTIKLELKLLADVGLIGLPNVGKSTLLSIMSNARPKIANYHFTTLEPNLGVCKVGEKSFVLADIPGLIEGASEGLGLGHDFLKHIERTKILVHVLDISGSEGRNPIEDFELINSELSSYNIKLNDKKMLVVLNKTDLGAEDNIKEFREKYSDKVDEIVEISAATTENVDKLMYLIADTLDSIEDDYSTLDEQYVYFEEEKEPDFKVRRENENYIVEGPLIENLIYRTNFEVYESVNHLQKVLEDKGVIQQLKDLGIQDGDNVVIGDVEFDFYE.

Residues 1 to 158 (MFIDVAKIEL…KTIKLELKLL (158 aa)) enclose the Obg domain. The interval 21–40 (AFRREKYEPSGGPAGGDGGD) is disordered. Residues 159 to 328 (ADVGLIGLPN…LMYLIADTLD (170 aa)) form the OBG-type G domain. GTP is bound by residues 165–172 (GLPNVGKS), 190–194 (FTTLE), 211–214 (DIPG), 281–284 (NKTD), and 309–311 (SAA). 2 residues coordinate Mg(2+): S172 and T192. The OCT domain maps to 344-421 (FEEEKEPDFK…IGDVEFDFYE (78 aa)).

Belongs to the TRAFAC class OBG-HflX-like GTPase superfamily. OBG GTPase family. As to quaternary structure, monomer. Mg(2+) serves as cofactor.

Its subcellular location is the cytoplasm. In terms of biological role, an essential GTPase which binds GTP, GDP and possibly (p)ppGpp with moderate affinity, with high nucleotide exchange rates and a fairly low GTP hydrolysis rate. Plays a role in control of the cell cycle, stress response, ribosome biogenesis and in those bacteria that undergo differentiation, in morphogenesis control. The protein is GTPase Obg of Finegoldia magna (strain ATCC 29328 / DSM 20472 / WAL 2508) (Peptostreptococcus magnus).